A 593-amino-acid chain; its full sequence is Copine-5 (593 aa).

The C2 1 domain maps to 2–134 (EQPEDMASLS…SSGSRLEKPL (133 aa)). S19 carries the post-translational modification Phosphoserine. Positions 38, 44, 98, 100, 103, 108, and 110 each coordinate Ca(2+). Phosphoserine is present on S103. S140 is modified (phosphoserine). A C2 2 domain is found at 161–284 (KCGTIILSAE…ARGQSQFNIY (124 aa)). D192, D198, D254, D256, and D262 together coordinate Ca(2+). Residues 328 to 554 (NFTVAIDFTA…DVLAEIPDQL (227 aa)) form the VWFA domain. Positions 562 to 593 (GIRPRPPPAAPAQSPPQSPAHSPPGSPVHTHI) are disordered. Pro residues predominate over residues 565 to 587 (PRPPPAAPAQSPPQSPAHSPPGS).

Belongs to the copine family. Requires Ca(2+) as cofactor. Expressed in the cerebra and cerebellum of newborn brain. Expressed in the eye, lung and muscles but weakly expressed in the adult brain (at protein level).

Its subcellular location is the perikaryon. The protein localises to the cell projection. Probable calcium-dependent phospholipid-binding protein that may play a role in calcium-mediated intracellular processes. Plays a role in dendrite formation by melanocytes. This is Copine-5 from Mus musculus (Mouse).